We begin with the raw amino-acid sequence, 198 residues long: 3-isopropylmalate dehydratase small subunit (198 aa).

This sequence belongs to the LeuD family. LeuD type 1 subfamily. In terms of assembly, heterodimer of LeuC and LeuD.

The enzyme catalyses (2R,3S)-3-isopropylmalate = (2S)-2-isopropylmalate. The protein operates within amino-acid biosynthesis; L-leucine biosynthesis; L-leucine from 3-methyl-2-oxobutanoate: step 2/4. In terms of biological role, catalyzes the isomerization between 2-isopropylmalate and 3-isopropylmalate, via the formation of 2-isopropylmaleate. This chain is 3-isopropylmalate dehydratase small subunit, found in Mycobacterium avium (strain 104).